The sequence spans 2303 residues: Genome polyprotein (2303 aa).

A zinc finger spans residues 3–14 (CKHGYPDVCPIC). An acidic region spans residues 30-46 (DGEWYPTDLLCVDLDDD). Residues 60 to 73 (MDWTDVPLIRDIVM) are theilo. Residues 74–93 (EPQGNSSSSDKSNSQSSGNE) form a disordered region. A lipid anchor (N-myristoyl glycine; by host) is attached at glycine 77. Positions 78–92 (NSSSSDKSNSQSSGN) are enriched in low complexity. A disulfide bridge connects residues cysteine 501 and cysteine 503. Residues 1041–1047 (YYRQRLI) form a host EIF4E binding region. One can recognise an SF3 helicase domain in the interval 1283–1448 (IPLASLCEKF…CKTPAGMLDV (166 aa)). Residue 1312–1319 (GAAGQGKS) coordinates ATP. The residue at position 1608 (tyrosine 1608) is an O-(5'-phospho-RNA)-tyrosine. Residues 1636–1829 (NPVMDFELFC…AATIITKELI (194 aa)) enclose the Peptidase C3 domain. Residues histidine 1680, aspartate 1714, and cysteine 1793 each act as for protease 3C activity in the active site. In terms of domain architecture, RdRp catalytic spans 2071–2189 (NYVYDVDYSN…GTNYQIDFNL (119 aa)). Catalysis depends on for RdRp activity residues aspartate 2077 and aspartate 2175.

Belongs to the picornaviruses polyprotein family. In terms of assembly, interacts with host EIF4E. Interacts with the leader protein. Interacts with host RAN; the complex L-RAN recruits cellular kinases responsible for the L-induced nucleocytoplasmic trafficking inhibition. The complex L-RAN can further bind to the host exportins XPO1/CRM1 and CSE1L/CAS. Interacts with the protein 2A. Interacts with host RNASEL; this interaction prevents RNASEL activation by its substrate 2'-5' oligoadenylates. In terms of processing, phosphorylated. Post-translationally, specific enzymatic cleavages by the viral protease in vivo yield a variety of precursors and mature proteins. The polyprotein seems to be cotranslationally cleaved at the 2A/2B junction by a ribosomal skip from one codon to the next without formation of a peptide bond. This process would release the P1-2A peptide from the translational complex. During virion maturation, immature virions are rendered infectious following cleavage of VP0 into VP4 and VP2. This maturation seems to be an autocatalytic event triggered by the presence of RNA in the capsid and is followed by a conformational change of the particle. In terms of processing, uridylylated by the polymerase and is covalently linked to the 5'-end of genomic RNA. This uridylylated form acts as a nucleotide-peptide primer for the polymerase. Post-translationally, myristoylation is required during RNA encapsidation and formation of the mature virus particle.

The protein resides in the virion. The protein localises to the host cytoplasm. Its subcellular location is the host nucleus. It localises to the host nucleolus. It is found in the host cytoplasmic vesicle membrane. The enzyme catalyses RNA(n) + a ribonucleoside 5'-triphosphate = RNA(n+1) + diphosphate. It catalyses the reaction ATP + H2O = ADP + phosphate + H(+). It carries out the reaction Selective cleavage of Gln-|-Gly bond in the poliovirus polyprotein. In other picornavirus reactions Glu may be substituted for Gln, and Ser or Thr for Gly.. Forms a complex with host RAN and probably binds to exportins carrying activated MAPK in order to mediate the hyperphosphorylation of host Phe/Gly containing nuclear pore proteins (Nups) resulting in cessation of active nucleocytoplasmic transport. Proteins with NLS signals fail to import, cellular mRNAs fail to export, and some proteins small enough for diffusion are not retained anymore (efflux). The resulting inhibition of cellular protein synthesis serves to ensure maximal viral gene expression and to evade host immune response. The leader protein also inhibits host interferon regulatory factor 3 (IRF3) dimerization, thereby blocking the transcriptional activation of IFN genes. Binds to host RNase L thereby preventing its activation by 2'-5' oligoadenylates in order to counteract the antiviral interferon-inducible OAS/RNase L pathway. Inhibits the integrated stress response (ISR) in the infected cell. Inhibits the host EIF2AK2/PKR by rendering this kinase unable to detect double-stranded RNA. Also impairs host stress granule formation probably by acting on a step downstream of EIF2AK2/PKR activation. Its function is as follows. Forms an icosahedral capsid of pseudo T=3 symmetry with capsid proteins VP2 and VP3. Together they form an icosahedral capsid composed of 60 copies of each VP1, VP2, and VP3, with a diameter of approximately 300 Angstroms. VP4 lies on the inner surface of the protein shell formed by VP1, VP2 and VP3. All the three latter proteins contain a beta-sheet structure called beta-barrel jelly roll. VP1 is situated at the 12 fivefold axes, whereas VP2 and VP3 are located at the quasi-sixfold axes. In terms of biological role, lies on the inner surface of the capsid shell. After binding to the host receptor, the capsid undergoes conformational changes. Capsid protein VP4 is released, capsid protein VP1 N-terminus is externalized, and together, they shape a pore in the host membrane through which the viral genome is translocated into the host cell cytoplasm. After genome has been released, the channel shrinks. Functionally, VP0 precursor is a component of immature procapsids. Involved in host translation shutoff by inhibiting cap-dependent mRNA translation. Nuclear localization is required for this function. The resulting inhibition of cellular protein synthesis serves to ensure maximal viral gene expression and to evade host immune response. Inhibits the phosphorylation of the leader protein. Its function is as follows. Affects membrane integrity and causes an increase in membrane permeability. In terms of biological role, associates with and induces structural rearrangements of intracellular membranes. It displays RNA-binding, nucleotide binding and NTPase activities. Functionally, serves as membrane anchor via its hydrophobic domain. Forms a primer, VPg-pU, which is utilized by the polymerase for the initiation of RNA chains. Its function is as follows. Cysteine protease that generates mature viral proteins from the precursor polyprotein. In addition to its proteolytic activity, it binds to viral RNA, and thus influences viral genome replication. RNA and substrate cooperatively bind to the protease. Cleaves host PABP1, this cleavage is important for viral replication. In terms of biological role, replicates the genomic and antigenomic RNAs by recognizing replications specific signals. Performs VPg uridylylation. The sequence is that of Genome polyprotein from Mus musculus (Mouse).